Here is a 118-residue protein sequence, read N- to C-terminus: Protein TusC (118 aa).

This sequence belongs to the DsrF/TusC family. In terms of assembly, heterohexamer, formed by a dimer of trimers. The hexameric TusBCD complex contains 2 copies each of TusB, TusC and TusD. The TusBCD complex interacts with TusE.

The protein localises to the cytoplasm. Part of a sulfur-relay system required for 2-thiolation of 5-methylaminomethyl-2-thiouridine (mnm(5)s(2)U) at tRNA wobble positions. This Salmonella gallinarum (strain 287/91 / NCTC 13346) protein is Protein TusC.